The primary structure comprises 212 residues: Glycerol-3-phosphate acyltransferase (212 aa).

The next 5 membrane-spanning stretches (helical) occupy residues 3–23 (LILLIIAAYLLGSIPTGLWIG), 69–89 (LLPMWLGVTHISPLLFGFFAI), 110–130 (AGILLGFAPFYLIFLLFIFFF), 143–163 (VIAASIAIITVLIFPALHFLL), and 165–185 (DYDFLFVLIVISAGSLIIIRH).

Belongs to the PlsY family. As to quaternary structure, probably interacts with PlsX.

The protein resides in the cell membrane. It carries out the reaction an acyl phosphate + sn-glycerol 3-phosphate = a 1-acyl-sn-glycero-3-phosphate + phosphate. It participates in lipid metabolism; phospholipid metabolism. Functionally, catalyzes the transfer of an acyl group from acyl-phosphate (acyl-PO(4)) to glycerol-3-phosphate (G3P) to form lysophosphatidic acid (LPA). This enzyme utilizes acyl-phosphate as fatty acyl donor, but not acyl-CoA or acyl-ACP. This chain is Glycerol-3-phosphate acyltransferase, found in Streptococcus mutans serotype c (strain ATCC 700610 / UA159).